Reading from the N-terminus, the 155-residue chain is Small ribosomal subunit protein uS7cz/uS7cy (155 aa).

This sequence belongs to the universal ribosomal protein uS7 family. In terms of assembly, part of the 30S ribosomal subunit.

The protein localises to the plastid. Its subcellular location is the chloroplast. Its function is as follows. One of the primary rRNA binding proteins, it binds directly to 16S rRNA where it nucleates assembly of the head domain of the 30S subunit. This chain is Small ribosomal subunit protein uS7cz/uS7cy (rps7-A), found in Ceratophyllum demersum (Rigid hornwort).